Consider the following 249-residue polypeptide: 23S rRNA (guanosine-2'-O-)-methyltransferase RlmB (249 aa).

S-adenosyl-L-methionine contacts are provided by G200, I220, and L229.

It belongs to the class IV-like SAM-binding methyltransferase superfamily. RNA methyltransferase TrmH family. RlmB subfamily.

The protein resides in the cytoplasm. The enzyme catalyses guanosine(2251) in 23S rRNA + S-adenosyl-L-methionine = 2'-O-methylguanosine(2251) in 23S rRNA + S-adenosyl-L-homocysteine + H(+). Its function is as follows. Specifically methylates the ribose of guanosine 2251 in 23S rRNA. The chain is 23S rRNA (guanosine-2'-O-)-methyltransferase RlmB from Xylella fastidiosa (strain 9a5c).